The following is a 499-amino-acid chain: Probable folate-biopterin transporter 2 (499 aa).

The next 12 helical transmembrane spans lie at 43–63 (WSFV…GGSL), 92–112 (IPWI…IFGF), 116–136 (PYFI…SLHS), 141–161 (YLAL…DVTI), 185–205 (LSSS…VHLV), 209–229 (GVFG…IVFS), 266–286 (LYMY…FYWF), 302–322 (FILS…QLVL), 330–350 (LCLW…ILVF), 354–374 (LKFG…SQMI), 399–419 (FALL…LGGI), and 435–455 (WLAV…LFLV).

This sequence belongs to the major facilitator superfamily. Folate-biopterin transporter (TC 2.A.71) family.

It localises to the membrane. Functionally, could mediate folate transport. This Arabidopsis thaliana (Mouse-ear cress) protein is Probable folate-biopterin transporter 2.